The following is a 515-amino-acid chain: MSQITLIILILAIGFSCTKSHPINSTRDGEDSGTDLKNLLTEPANTTYATNSTLTRKELNSTIQPERNDEGSAIRKIMASKKDENITGQSEINTSAKSQPINSTRDGEDSGTDLKNLLTEPANTTYATNSTLTRKELNSSIPPERNDEGSAIRKIMASKKDEIITGQSEINTIAKSQPINSTRDGEDSGTDLKNLLTEPANTTYATNSTLTRKELNSSIPPERNDEGSAIRKIMASKKDEIITGQSEINTIAKSQPINSTRDGEDSGTDLKNLLTELANTTYLTNSTLTRKELNSIIQPERNDESSAIRKIMASKKDENVTGQSEINTSAKSQPINSTRDGEDSGTDLKNLLTDPANTTYATNSTLTRKELNSTIQPERNDETSAIRKIMASRKDENVTGQSEFNISTNSNLNTTTHHEDAVVSPTEKVYVPNNASSAELNVSSTIQPKEADATTSSANDIKKPAFPYCIILITFQIVTVGMIIYLVFRTMRKPCQSERAIPLNTFGFGNNSSHE.

An N-terminal signal peptide occupies residues 1-20; the sequence is MSQITLIILILAIGFSCTKS. The Extracellular portion of the chain corresponds to 21–467; that stretch reads HPINSTRDGE…ANDIKKPAFP (447 aa). Residues Asn24, Asn45, Asn51, Asn60, Asn85, Asn93, Asn102, Asn123, Asn129, Asn138, Asn180, Asn201, Asn207, Asn216, Asn258, Asn279, Asn285, Asn319, Asn327, Asn336, Asn357, Asn363, Asn372, Asn397, Asn405, Asn413, Asn434, and Asn441 are each glycosylated (N-linked (GlcNAc...) asparagine; by host). Residues 80 to 114 form a disordered region; it reads SKKDENITGQSEINTSAKSQPINSTRDGEDSGTDL. Over residues 86-104 the composition is skewed to polar residues; the sequence is ITGQSEINTSAKSQPINST. The tract at residues 314–358 is disordered; sequence SKKDENVTGQSEINTSAKSQPINSTRDGEDSGTDLKNLLTDPANT. Residues 320-338 are compositionally biased toward polar residues; it reads VTGQSEINTSAKSQPINST. The tract at residues 393 to 413 is disordered; the sequence is RKDENVTGQSEFNISTNSNLN. The chain crosses the membrane as a helical span at residues 468-488; it reads YCIILITFQIVTVGMIIYLVF. Over 489 to 515 the chain is Cytoplasmic; it reads RTMRKPCQSERAIPLNTFGFGNNSSHE.

The protein belongs to the polydnaviridae Glc1.8 protein family.

It localises to the host membrane. In terms of biological role, involved in suppression of the insect cellular immune response. Inhibits host hemocyte adhesion and phagocytosis. The protein is Mucin-like protein Glc1.8a (O9) of Microplitis demolitor (Parasitoid wasp).